A 497-amino-acid polypeptide reads, in one-letter code: uncharacterized protein (497 aa).

The span at 44–74 (IRQEKEMKRHDDDGRQYQSDRKFAKSKHDDI) shows a compositional bias: basic and acidic residues. 3 disordered regions span residues 44–95 (IRQE…SVGR), 120–151 (VSRS…EHRD), and 195–227 (GNVI…TSAR). The segment covering 120–131 (VSRSSSIGHSGS) has biased composition (low complexity). 3 positions are modified to phosphoserine: S123, S125, and S131. The residue at position 132 (T132) is a Phosphothreonine. Residues 213–227 (ASLSRAASNSSTSAR) are compositionally biased toward low complexity. The residue at position 258 (T258) is a Phosphothreonine. At S310 the chain carries Phosphoserine. The span at 367–385 (NVNPSNQDLASVKQPSGFS) shows a compositional bias: polar residues. A disordered region spans residues 367–497 (NVNPSNQDLA…GFPDTSRPPH (131 aa)). Positions 400 to 409 (NFSNDDSSFF) are enriched in low complexity. Position 436 is a phosphoserine (S436). Over residues 448–472 (GLSSGASIPSAPPGFGYQQPSFPYS) the composition is skewed to low complexity.

It localises to the cytoplasm. Its subcellular location is the nucleus. This is an uncharacterized protein from Schizosaccharomyces pombe (strain 972 / ATCC 24843) (Fission yeast).